Reading from the N-terminus, the 327-residue chain is Opticin (327 aa).

Positions 1 to 19 are cleaved as a signal peptide; that stretch reads MKLPAFLSLLALVLLEAGT. A sulfotyrosine mark is found at tyrosine 61 and tyrosine 67. Residues 111-148 enclose the LRRNT domain; that stretch reads VLGSPNSHGLPTCLICVCLGSSVYCDDADLENIPPLPK. LRR repeat units lie at residues 149 to 170, 173 to 194, 197 to 218, 219 to 237, 243 to 263, 264 to 285, and 295 to 315; these read TTTY…DFKG, KLKR…ALRL, ALQD…PPAI, EVLD…QPEA, KLQF…PLPP, SLRS…AFCD, and WLED…PSAY. A disulfide bridge connects residues cysteine 284 and cysteine 317.

Belongs to the small leucine-rich proteoglycan (SLRP) family. SLRP class III subfamily. In terms of assembly, homodimer. O-glycosylated. Post-translationally, proteolytically cleaved by MMP1, MMP2, MMP3, MMP7, MMP8, MMP9, ADAMTS4, and ADAMTS5. Proteolytically cleaved by MMP13. In terms of processing, sulfated on tyrosine residues. As to expression, ocular tissues, cartilage, ligament, skin, muscle and testes.

The protein localises to the secreted. It is found in the extracellular space. It localises to the extracellular matrix. In terms of biological role, inhibits angiogenesis in the vitreous humor of the eye, and therefore represses neovascularization. Binds collagen fibrils. May be involved in collagen fiber organization via regulation of other members of the small leucine-rich repeat proteoglycan superfamily. This is Opticin (OPTC) from Canis lupus familiaris (Dog).